The primary structure comprises 486 residues: CREB-regulated transcription coactivator 1 homolog (486 aa).

The disordered stretch occupies residues 1-62; that stretch reads MSNSNTPRKF…APMPIPQQGL (62 aa). The span at 9–23 shows a compositional bias: basic and acidic residues; sequence KFSEKIAILERKQNE. The segment covering 34-52 has biased composition (polar residues); that stretch reads QVQSITHHPTDSSGSSTAT. Serine 76 carries the phosphoserine; by AMPK modification. Residues 103-166 form a disordered region; it reads PIQGHRSRSP…PPYNQPGQLV (64 aa). A compositionally biased stretch (pro residues) spans 144–160; sequence RTPPQHPQYTPYGPPYN. A Phosphoserine; by AMPK modification is found at serine 179. 3 disordered regions span residues 214 to 278, 327 to 417, and 460 to 486; these read SMPG…QSPN, FNQD…SNSP, and APPQTISNHQTPNNSFHDPGGTQMLQN. Composition is skewed to polar residues over residues 224-245, 387-402, and 461-475; these read PNSQSQQHSPQLTPQGSQQGSP, PESQSAPTSPHNQLDP, and PPQTISNHQTPNNSF.

Belongs to the TORC family. Interacts with crh-1. In terms of processing, phosphorylated by AMPK at Ser-76 and Ser-179. Dephosphorylated by tax-6, the catalytic subunit of calcineurin. In terms of tissue distribution, expressed throughout the intestine and in head and tail neurons. Expressed in octopaminergic RIC neurons.

It is found in the nucleus. It localises to the cytoplasm. Its subcellular location is the cytosol. Its function is as follows. Transcriptional coactivator for crh-1, the homolog of vertebrate transcription factor CREB1. Regulates the transcription of metabolic genes and may have a role in mitochondrial dynamics and metabolism. Involved in modulation of lifespan. Through crh-1, counteracts the pro-lifespan-extension signals of AMPK both cell autonomously and, when expressed in neurons, at a systemic level, possibly using the catecholamine analog, octopamine, as a messenger. This is CREB-regulated transcription coactivator 1 homolog from Caenorhabditis elegans.